A 54-amino-acid chain; its full sequence is Large ribosomal subunit protein bL32c (54 aa).

The tract at residues 1 to 20 (MAVPKKKMSKSRRNSRKSNW) is disordered.

This sequence belongs to the bacterial ribosomal protein bL32 family.

The protein localises to the plastid. It is found in the chloroplast. The polypeptide is Large ribosomal subunit protein bL32c (rpl32) (Euglena gracilis).